The chain runs to 240 residues: tRNA pseudouridine synthase A (240 aa).

Asp52 (nucleophile) is an active-site residue. Residue Tyr110 participates in substrate binding.

Belongs to the tRNA pseudouridine synthase TruA family. As to quaternary structure, homodimer.

It carries out the reaction uridine(38/39/40) in tRNA = pseudouridine(38/39/40) in tRNA. Its function is as follows. Formation of pseudouridine at positions 38, 39 and 40 in the anticodon stem and loop of transfer RNAs. This is tRNA pseudouridine synthase A from Solibacter usitatus (strain Ellin6076).